A 206-amino-acid chain; its full sequence is Histidine biosynthesis bifunctional protein HisIE (206 aa).

Residues 1 to 117 form a phosphoribosyl-AMP cyclohydrolase region; the sequence is MCNEPATSDV…SCFPAAPGQF (117 aa). The segment at 118–206 is phosphoribosyl-ATP pyrophosphohydrolase; it reads LGALDALVAE…AVTVLEARHR (89 aa).

The protein in the N-terminal section; belongs to the PRA-CH family. In the C-terminal section; belongs to the PRA-PH family.

Its subcellular location is the cytoplasm. The catalysed reaction is 1-(5-phospho-beta-D-ribosyl)-ATP + H2O = 1-(5-phospho-beta-D-ribosyl)-5'-AMP + diphosphate + H(+). The enzyme catalyses 1-(5-phospho-beta-D-ribosyl)-5'-AMP + H2O = 1-(5-phospho-beta-D-ribosyl)-5-[(5-phospho-beta-D-ribosylamino)methylideneamino]imidazole-4-carboxamide. It functions in the pathway amino-acid biosynthesis; L-histidine biosynthesis; L-histidine from 5-phospho-alpha-D-ribose 1-diphosphate: step 2/9. The protein operates within amino-acid biosynthesis; L-histidine biosynthesis; L-histidine from 5-phospho-alpha-D-ribose 1-diphosphate: step 3/9. This is Histidine biosynthesis bifunctional protein HisIE (hisI) from Xylella fastidiosa (strain Temecula1 / ATCC 700964).